Here is a 405-residue protein sequence, read N- to C-terminus: Phosphatidylinositol 5-phosphate 4-kinase type-2 alpha (405 aa).

An N-acetylalanine modification is found at alanine 2. Position 3 is a phosphothreonine (threonine 3). Serine 14 is modified (phosphoserine). One can recognise a PIPK domain in the interval 33–405 (ASDPLLSVLM…RFLDFIGHIL (373 aa)). Residues 59 to 65 (VMLMPDD) are required for interaction with PIP5K1A. Lysine 89 and lysine 145 each carry N6-acetyllysine. Residues 288 to 328 (QEEVECEENDGEEEGESDSTHPIGTPPDSPGNTLNSSPPLA) are disordered. Acidic residues predominate over residues 289–304 (EEVECEENDGEEEGES).

As to quaternary structure, homodimer. Interacts with PIP4K2B; the interaction may regulate localization to the nucleus. Probably interacts with PIP5K1A; the interaction inhibits PIP5K1A kinase activity. Phosphorylated in tyrosines. Phosphorylation is induced by light and increases kinase activity. In terms of tissue distribution, detected in rod photoreceptor cells.

It is found in the cell membrane. It localises to the nucleus. Its subcellular location is the lysosome. The protein localises to the cytoplasm. The protein resides in the photoreceptor inner segment. It is found in the cell projection. It localises to the cilium. Its subcellular location is the photoreceptor outer segment. It carries out the reaction a 1,2-diacyl-sn-glycero-3-phospho-(1D-myo-inositol-5-phosphate) + ATP = a 1,2-diacyl-sn-glycero-3-phospho-(1D-myo-inositol-4,5-bisphosphate) + ADP + H(+). The catalysed reaction is 1,2-dihexadecanoyl-sn-glycero-3-phospho-(1D-myo-inositol-5-phosphate) + ATP = 1,2-dihexadecanoyl-sn-glycero-3-phospho-(1D-myo-inositol-4,5-bisphosphate) + ADP + H(+). It catalyses the reaction 1,2-dihexadecanoyl-sn-glycero-3-phospho-(1D-myo-inositol-5-phosphate) + GTP = 1,2-dihexadecanoyl-sn-glycero-3-phospho-(1D-myo-inositol-4,5-bisphosphate) + GDP + H(+). In rod outer segments, activated by light. Catalyzes the phosphorylation of phosphatidylinositol 5-phosphate (PtdIns5P) on the fourth hydroxyl of the myo-inositol ring, to form phosphatidylinositol 4,5-bisphosphate (PtdIns(4,5)P2). Has both ATP- and GTP-dependent kinase activities. May exert its function by regulating the levels of PtdIns5P, which functions in the cytosol by increasing AKT activity and in the nucleus signals through ING2. May regulate the pool of cytosolic PtdIns5P in response to the activation of tyrosine phosphorylation. Required for lysosome-peroxisome membrane contacts and intracellular cholesterol transport through modulating peroxisomal PtdIns(4,5)P2 level. In collaboration with PIP4K2B, has a role in mediating autophagy in times of nutrient stress. Required for autophagosome-lysosome fusion and the regulation of cellular lipid metabolism. Negatively regulates insulin signaling through a catalytic-independent mechanism. PIP4Ks interact with PIP5Ks and suppress PIP5K-mediated PtdIns(4,5)P2 synthesis and insulin-dependent conversion to PtdIns(3,4,5)P3. May be involved in thrombopoiesis, and the terminal maturation of megakaryocytes and regulation of their size. The protein is Phosphatidylinositol 5-phosphate 4-kinase type-2 alpha of Mus musculus (Mouse).